The sequence spans 273 residues: Putative phosphoenolpyruvate synthase regulatory protein (273 aa).

153–160 (AVSRAGKT) contributes to the ADP binding site.

It belongs to the pyruvate, phosphate/water dikinase regulatory protein family. PSRP subfamily.

It catalyses the reaction [pyruvate, water dikinase] + ADP = [pyruvate, water dikinase]-phosphate + AMP + H(+). The catalysed reaction is [pyruvate, water dikinase]-phosphate + phosphate + H(+) = [pyruvate, water dikinase] + diphosphate. Bifunctional serine/threonine kinase and phosphorylase involved in the regulation of the phosphoenolpyruvate synthase (PEPS) by catalyzing its phosphorylation/dephosphorylation. This is Putative phosphoenolpyruvate synthase regulatory protein from Xanthomonas axonopodis pv. citri (strain 306).